The following is a 123-amino-acid chain: Small ribosomal subunit protein uS12 (123 aa).

Asp89 is modified (3-methylthioaspartic acid).

This sequence belongs to the universal ribosomal protein uS12 family. In terms of assembly, part of the 30S ribosomal subunit. Contacts proteins S8 and S17. May interact with IF1 in the 30S initiation complex.

Its function is as follows. With S4 and S5 plays an important role in translational accuracy. In terms of biological role, interacts with and stabilizes bases of the 16S rRNA that are involved in tRNA selection in the A site and with the mRNA backbone. Located at the interface of the 30S and 50S subunits, it traverses the body of the 30S subunit contacting proteins on the other side and probably holding the rRNA structure together. The combined cluster of proteins S8, S12 and S17 appears to hold together the shoulder and platform of the 30S subunit. The chain is Small ribosomal subunit protein uS12 from Desulfovibrio desulfuricans (strain ATCC 27774 / DSM 6949 / MB).